The sequence spans 431 residues: Polygalacturonase ADPG1 (431 aa).

The N-terminal stretch at 1–23 is a signal peptide; that stretch reads MARCCRHLAVFLCVLLMLSLCKA. PbH1 repeat units lie at residues 223–249 and 250–271; these read CNKVEVSNVEITAPGDSPNTDGIHITN and TQNIRVSNSDIGTGDDCISIED. Residue D264 is the Proton donor of the active site. Residue H287 is part of the active site. PbH1 repeat units follow at residues 303 to 324, 332 to 353, and 398 to 420; these read VSGINVDGAKFSESDNGVRIKT, AKNIKFQNIRMENVKNPIIIDQ, and CQGIVLENVKIKGGTASCKNANV.

It belongs to the glycosyl hydrolase 28 family. As to expression, expressed in flower buds and siliques, in the dehiscence zone of anthers (stomium cells) and maturing siliques. Expressed in stigma during pollen tube growth. Not expressed in seeds or in the floral part or leaf abscission zone but found at the junction between the seed and the funiculus at the site of seed abscission.

The protein resides in the secreted. It is found in the cell wall. It localises to the cytoplasm. The enzyme catalyses (1,4-alpha-D-galacturonosyl)n+m + H2O = (1,4-alpha-D-galacturonosyl)n + (1,4-alpha-D-galacturonosyl)m.. Its function is as follows. Polygalacturonase involved in cell separation in the final stages of pod shatter and in anther dehiscence. Not involved in floral organ abscission. The chain is Polygalacturonase ADPG1 (ADPG1) from Arabidopsis thaliana (Mouse-ear cress).